The following is a 315-amino-acid chain: Aspartate carbamoyltransferase catalytic subunit (315 aa).

Carbamoyl phosphate is bound by residues Arg55 and Thr56. Lys83 lines the L-aspartate pocket. Carbamoyl phosphate contacts are provided by Arg105, His138, and Gln141. L-aspartate contacts are provided by Arg171 and Arg225. Carbamoyl phosphate is bound by residues Gly266 and Pro267.

This sequence belongs to the aspartate/ornithine carbamoyltransferase superfamily. ATCase family. In terms of assembly, heterododecamer (2C3:3R2) of six catalytic PyrB chains organized as two trimers (C3), and six regulatory PyrI chains organized as three dimers (R2).

It catalyses the reaction carbamoyl phosphate + L-aspartate = N-carbamoyl-L-aspartate + phosphate + H(+). It participates in pyrimidine metabolism; UMP biosynthesis via de novo pathway; (S)-dihydroorotate from bicarbonate: step 2/3. In terms of biological role, catalyzes the condensation of carbamoyl phosphate and aspartate to form carbamoyl aspartate and inorganic phosphate, the committed step in the de novo pyrimidine nucleotide biosynthesis pathway. This chain is Aspartate carbamoyltransferase catalytic subunit, found in Mycolicibacterium gilvum (strain PYR-GCK) (Mycobacterium gilvum (strain PYR-GCK)).